A 458-amino-acid chain; its full sequence is Cell division protein FtsZ (458 aa).

Residues 22-26 (GAGGN), 109-111 (GTG), glutamate 140, arginine 144, and aspartate 188 contribute to the GTP site. Residues 319-458 (KAEEEASKQP…IPFFKHRRQD (140 aa)) form a disordered region. Over residues 368–379 (NTISHEAPTQSI) the composition is skewed to polar residues. Positions 401–418 (KQDRKENNRPQPVENKEK) are enriched in basic and acidic residues. Residues 425–439 (SFSSDDSTSISQIET) show a composition bias toward low complexity.

It belongs to the FtsZ family. Homodimer. Polymerizes to form a dynamic ring structure in a strictly GTP-dependent manner. Interacts directly with several other division proteins.

It is found in the cytoplasm. Its function is as follows. Essential cell division protein that forms a contractile ring structure (Z ring) at the future cell division site. The regulation of the ring assembly controls the timing and the location of cell division. One of the functions of the FtsZ ring is to recruit other cell division proteins to the septum to produce a new cell wall between the dividing cells. Binds GTP and shows GTPase activity. The sequence is that of Cell division protein FtsZ from Lactobacillus johnsonii (strain CNCM I-12250 / La1 / NCC 533).